The primary structure comprises 473 residues: 3-isopropylmalate dehydratase large subunit (473 aa).

3 residues coordinate [4Fe-4S] cluster: Cys-351, Cys-414, and Cys-417.

This sequence belongs to the aconitase/IPM isomerase family. LeuC type 1 subfamily. Heterodimer of LeuC and LeuD. [4Fe-4S] cluster is required as a cofactor.

It carries out the reaction (2R,3S)-3-isopropylmalate = (2S)-2-isopropylmalate. It participates in amino-acid biosynthesis; L-leucine biosynthesis; L-leucine from 3-methyl-2-oxobutanoate: step 2/4. Its function is as follows. Catalyzes the isomerization between 2-isopropylmalate and 3-isopropylmalate, via the formation of 2-isopropylmaleate. This is 3-isopropylmalate dehydratase large subunit from Acidovorax sp. (strain JS42).